The primary structure comprises 190 residues: Threonylcarbamoyl-AMP synthase (190 aa).

A YrdC-like domain is found at 10 to 190; that stretch reads PQDKESVYRH…DWHSRQVIRA (181 aa).

The protein belongs to the SUA5 family. TsaC subfamily.

It is found in the cytoplasm. It catalyses the reaction L-threonine + hydrogencarbonate + ATP = L-threonylcarbamoyladenylate + diphosphate + H2O. Required for the formation of a threonylcarbamoyl group on adenosine at position 37 (t(6)A37) in tRNAs that read codons beginning with adenine. Catalyzes the conversion of L-threonine, HCO(3)(-)/CO(2) and ATP to give threonylcarbamoyl-AMP (TC-AMP) as the acyladenylate intermediate, with the release of diphosphate. This is Threonylcarbamoyl-AMP synthase from Dichelobacter nodosus (strain VCS1703A).